The chain runs to 429 residues: MRVLILGSGVIGVTSAWYLAQAGCEVTVVDRQPAAALETSYANAGQLSFGYTSPWAAPGVPGKAVKWLFEQHAPLSIRPTRDLRQLAWLSQMLRNCTAERYAVNKARMVRMSDYSRDCLNALRAETGIEFEGRQLGTTQLFRTQQQLDAAAQDIEVLAQYGVPYELLSPAQIAQFEPGLAGGGAQMAGALRLPEDQTGDCRLFTQRLAELAAQAGVTFRYGQQIERLEHAGGQVSGVQIDGRMETADRYVLALGSYSADLLLSLGLHLPVYPLKGYSLTIPIVDAQRAPTSTVLDESYKIALTRFDDRIRVGGMAEVAGFDLSLNPRRRATLEMVVNDLFPGGGDLAQAEFWTGLRPATPDGTPVVGATPYANLFLNTGHGTLGWTMACGSGRYLADLMQGRTPEIDTEGLDVFRYLSPRSARAQREAA.

Residue 3 to 17 coordinates FAD; the sequence is VLILGSGVIGVTSAW.

The protein belongs to the DadA oxidoreductase family. The cofactor is FAD.

The enzyme catalyses a D-alpha-amino acid + A + H2O = a 2-oxocarboxylate + AH2 + NH4(+). It functions in the pathway amino-acid degradation; D-alanine degradation; NH(3) and pyruvate from D-alanine: step 1/1. Oxidative deamination of D-amino acids. This is D-amino acid dehydrogenase from Xanthomonas euvesicatoria pv. vesicatoria (strain 85-10) (Xanthomonas campestris pv. vesicatoria).